The chain runs to 176 residues: Cytochrome b (176 aa).

The next 3 membrane-spanning stretches (helical) occupy residues Phe33–Met53, Trp77–Val98, and Trp113–Leu133. Heme b is bound by residues His83 and His97.

It belongs to the cytochrome b family. As to quaternary structure, the cytochrome bc1 complex contains 11 subunits: 3 respiratory subunits (MT-CYB, CYC1 and UQCRFS1), 2 core proteins (UQCRC1 and UQCRC2) and 6 low-molecular weight proteins (UQCRH/QCR6, UQCRB/QCR7, UQCRQ/QCR8, UQCR10/QCR9, UQCR11/QCR10 and a cleavage product of UQCRFS1). This cytochrome bc1 complex then forms a dimer. It depends on heme b as a cofactor.

It is found in the mitochondrion inner membrane. Functionally, component of the ubiquinol-cytochrome c reductase complex (complex III or cytochrome b-c1 complex) that is part of the mitochondrial respiratory chain. The b-c1 complex mediates electron transfer from ubiquinol to cytochrome c. Contributes to the generation of a proton gradient across the mitochondrial membrane that is then used for ATP synthesis. In Nycticeius humeralis (Evening bat), this protein is Cytochrome b (MT-CYB).